The following is a 620-amino-acid chain: 1-deoxy-D-xylulose-5-phosphate synthase (620 aa).

Thiamine diphosphate contacts are provided by residues histidine 80 and 121 to 123; that span reads GHS. Aspartate 152 lines the Mg(2+) pocket. Residues 153–154, asparagine 181, tyrosine 288, and glutamate 370 each bind thiamine diphosphate; that span reads GA. A Mg(2+)-binding site is contributed by asparagine 181.

It belongs to the transketolase family. DXPS subfamily. Homodimer. It depends on Mg(2+) as a cofactor. Requires thiamine diphosphate as cofactor.

The enzyme catalyses D-glyceraldehyde 3-phosphate + pyruvate + H(+) = 1-deoxy-D-xylulose 5-phosphate + CO2. It functions in the pathway metabolic intermediate biosynthesis; 1-deoxy-D-xylulose 5-phosphate biosynthesis; 1-deoxy-D-xylulose 5-phosphate from D-glyceraldehyde 3-phosphate and pyruvate: step 1/1. In terms of biological role, catalyzes the acyloin condensation reaction between C atoms 2 and 3 of pyruvate and glyceraldehyde 3-phosphate to yield 1-deoxy-D-xylulose-5-phosphate (DXP). The polypeptide is 1-deoxy-D-xylulose-5-phosphate synthase (Salmonella agona (strain SL483)).